The sequence spans 95 residues: Protein TusB (95 aa).

Belongs to the DsrH/TusB family. In terms of assembly, heterohexamer, formed by a dimer of trimers. The hexameric TusBCD complex contains 2 copies each of TusB, TusC and TusD. The TusBCD complex interacts with TusE.

The protein localises to the cytoplasm. Functionally, part of a sulfur-relay system required for 2-thiolation of 5-methylaminomethyl-2-thiouridine (mnm(5)s(2)U) at tRNA wobble positions. In Salmonella dublin (strain CT_02021853), this protein is Protein TusB.